The primary structure comprises 428 residues: Light-independent protochlorophyllide reductase subunit N (428 aa).

The [4Fe-4S] cluster site is built by C29, C54, and C115.

The protein belongs to the BchN/ChlN family. In terms of assembly, protochlorophyllide reductase is composed of three subunits; BchL, BchN and BchB. Forms a heterotetramer of two BchB and two BchN subunits. [4Fe-4S] cluster is required as a cofactor.

The catalysed reaction is chlorophyllide a + oxidized 2[4Fe-4S]-[ferredoxin] + 2 ADP + 2 phosphate = protochlorophyllide a + reduced 2[4Fe-4S]-[ferredoxin] + 2 ATP + 2 H2O. It participates in porphyrin-containing compound metabolism; bacteriochlorophyll biosynthesis (light-independent). Component of the dark-operative protochlorophyllide reductase (DPOR) that uses Mg-ATP and reduced ferredoxin to reduce ring D of protochlorophyllide (Pchlide) to form chlorophyllide a (Chlide). This reaction is light-independent. The NB-protein (BchN-BchB) is the catalytic component of the complex. The sequence is that of Light-independent protochlorophyllide reductase subunit N from Cereibacter sphaeroides (strain ATCC 17025 / ATH 2.4.3) (Rhodobacter sphaeroides).